Here is a 621-residue protein sequence, read N- to C-terminus: uncharacterized protein (621 aa).

Positions 1-15 (MRRSVCYVTPSVARA) are cleaved as a signal peptide.

The protein belongs to the chlamydial CPn_0512/CT_425/TC_0708 family.

This is an uncharacterized protein from Chlamydia trachomatis serovar D (strain ATCC VR-885 / DSM 19411 / UW-3/Cx).